The sequence spans 130 residues: Small ribosomal subunit protein uS9 (130 aa).

The protein belongs to the universal ribosomal protein uS9 family.

The sequence is that of Small ribosomal subunit protein uS9 from Delftia acidovorans (strain DSM 14801 / SPH-1).